Consider the following 377-residue polypeptide: Tryptophan--tRNA ligase, mitochondrial (377 aa).

Residues glutamine 21 and histidine 28–asparagine 31 each bind ATP. A 'HIGH' region motif is present at residues proline 22–asparagine 31. Aspartate 181 contributes to the L-tryptophan binding site. Residues glycine 193–aspartate 195, lysine 242–serine 246, and lysine 245 each bind ATP. Positions lysine 242–serine 246 match the 'KMSKS' region motif.

This sequence belongs to the class-I aminoacyl-tRNA synthetase family.

The protein resides in the mitochondrion matrix. The enzyme catalyses tRNA(Trp) + L-tryptophan + ATP = L-tryptophyl-tRNA(Trp) + AMP + diphosphate + H(+). The sequence is that of Tryptophan--tRNA ligase, mitochondrial (wars2) from Dictyostelium discoideum (Social amoeba).